A 233-amino-acid chain; its full sequence is Putative N-acetylmuramoyl-L-alanine amidase (233 aa).

In terms of domain architecture, MurNAc-LAA spans 1 to 219; it reads MIDPGHGGQD…IANAIYIALK (219 aa).

It belongs to the N-acetylmuramoyl-L-alanine amidase 3 family.

Its subcellular location is the secreted. It catalyses the reaction Hydrolyzes the link between N-acetylmuramoyl residues and L-amino acid residues in certain cell-wall glycopeptides.. In terms of biological role, cell-wall hydrolase involved in septum cleavage during cell division. The polypeptide is Putative N-acetylmuramoyl-L-alanine amidase (amiB) (Buchnera aphidicola subsp. Schizaphis graminum (strain Sg)).